Reading from the N-terminus, the 299-residue chain is Putative transposase InsZ (299 aa).

Residues 276 to 291 show a composition bias toward basic residues; the sequence is PSRPRSVKISKTRYPV. Residues 276 to 299 form a disordered region; it reads PSRPRSVKISKTRYPVKHSAAPLK.

This Escherichia coli (strain K12) protein is Putative transposase InsZ (insZ).